Consider the following 152-residue polypeptide: Large-conductance mechanosensitive channel (152 aa).

A run of 3 helical transmembrane segments spans residues 21–41 (IDLA…DSLV), 44–64 (VVMP…NKFL), and 92–112 (GNFI…FWMV).

The protein belongs to the MscL family. In terms of assembly, homopentamer.

The protein resides in the cell inner membrane. Its function is as follows. Channel that opens in response to stretch forces in the membrane lipid bilayer. May participate in the regulation of osmotic pressure changes within the cell. The chain is Large-conductance mechanosensitive channel from Bordetella bronchiseptica (strain ATCC BAA-588 / NCTC 13252 / RB50) (Alcaligenes bronchisepticus).